The chain runs to 428 residues: Glutamate-1-semialdehyde 2,1-aminomutase (428 aa).

Lysine 267 is modified (N6-(pyridoxal phosphate)lysine).

This sequence belongs to the class-III pyridoxal-phosphate-dependent aminotransferase family. HemL subfamily. In terms of assembly, homodimer. Requires pyridoxal 5'-phosphate as cofactor.

It localises to the cytoplasm. It carries out the reaction (S)-4-amino-5-oxopentanoate = 5-aminolevulinate. The protein operates within porphyrin-containing compound metabolism; protoporphyrin-IX biosynthesis; 5-aminolevulinate from L-glutamyl-tRNA(Glu): step 2/2. In Persephonella marina (strain DSM 14350 / EX-H1), this protein is Glutamate-1-semialdehyde 2,1-aminomutase.